A 411-amino-acid polypeptide reads, in one-letter code: Alpha-1-antiproteinase (411 aa).

The signal sequence occupies residues 1–24; it reads MAPSISRGLLLLAALCCLAPSFLA. Position 33 is a phosphoserine (Ser33). Residues Asn64, Asn101, and Asn265 are each glycosylated (N-linked (GlcNAc...) asparagine). The segment at 367-386 is RCL; the sequence is GATVVEAVPMSLPPQVKFDH. Ser377 carries the phosphoserine modification.

The protein belongs to the serpin family. As to quaternary structure, interacts with CELA2A. Interacts with ERGIC3 and LMAN1/ERGIC53. Interacts with PRSS1/Trypsin. In terms of tissue distribution, plasma.

It is found in the secreted. Functionally, inhibitor of serine proteases. The primary target is elastase, but also has a moderate affinity for plasmin and thrombin. The polypeptide is Alpha-1-antiproteinase (Serpina1) (Rattus norvegicus (Rat)).